Here is a 621-residue protein sequence, read N- to C-terminus: ATP-dependent DNA helicase Q1 (621 aa).

One can recognise a Helicase ATP-binding domain in the interval 100-275 (VNATMARKDI…QKILCVEKCL (176 aa)). 113 to 120 (MPTGGGKS) is a binding site for ATP. Residues 219 to 222 (DEVH) carry the DEVH box motif. One can recognise a Helicase C-terminal domain in the interval 296–451 (SAEDFIENIA…EMVSYCQNIS (156 aa)). 4 residues coordinate Zn(2+): C453, C471, C475, and C478. N6-acetyllysine occurs at positions 514 and 522. Phosphoserine occurs at positions 597 and 602.

Belongs to the helicase family. RecQ subfamily. May form homodimers or higher order oligomers. Interacts with EXO1. Interacts with MLH1. Interacts with PARP1. It depends on Mg(2+) as a cofactor. Mn(2+) is required as a cofactor. The cofactor is Zn(2+).

It is found in the nucleus. It carries out the reaction Couples ATP hydrolysis with the unwinding of duplex DNA by translocating in the 3'-5' direction.. It catalyses the reaction ATP + H2O = ADP + phosphate + H(+). The catalysed reaction is dATP + H2O = dADP + phosphate + H(+). DNA helicase that plays a role in DNA damage repair and genome stability. Exhibits a magnesium- and ATP-dependent DNA-helicase activity that unwinds single- and double-stranded DNA in a 3'-5' direction. Plays a role in restoring regressed replication forks. Required to restart stalled replication forks induced by abortive topoisomerase 1 and 2 lesions. May play a role in the repair of DNA that is damaged by ultraviolet light or other mutagens. This Rattus norvegicus (Rat) protein is ATP-dependent DNA helicase Q1 (Recql).